A 206-amino-acid chain; its full sequence is Two-component response regulator ARR7 (206 aa).

A Response regulatory domain is found at 25–152 (HVLAVDDSIV…DVKRIKQLIM (128 aa)). Residue Asp-85 is modified to 4-aspartylphosphate. The disordered stretch occupies residues 165–206 (SNKRKLQEDSDTSSSSHDDTSIKDSSCSKRMKSESENLFSLL).

This sequence belongs to the ARR family. Type-A subfamily. In terms of processing, two-component system major event consists of a His-to-Asp phosphorelay between a sensor histidine kinase (HK) and a response regulator (RR). In plants, the His-to-Asp phosphorelay involves an additional intermediate named Histidine-containing phosphotransfer protein (HPt). This multistep phosphorelay consists of a His-Asp-His-Asp sequential transfer of a phosphate group between first a His and an Asp of the HK protein, followed by the transfer to a conserved His of the HPt protein and finally the transfer to an Asp in the receiver domain of the RR protein. Predominantly expressed in roots and young flowers.

It localises to the nucleus. Functionally, functions as a response regulator involved in His-to-Asp phosphorelay signal transduction system. Phosphorylation of the Asp residue in the receiver domain activates the ability of the protein to promote the transcription of target genes. Type-A response regulators seem to act as negative regulators of the cytokinin signaling. The sequence is that of Two-component response regulator ARR7 (ARR7) from Arabidopsis thaliana (Mouse-ear cress).